We begin with the raw amino-acid sequence, 394 residues long: Elongation factor Tu (394 aa).

The region spanning 10 to 204 (KPHVNVGTIG…YLDSYIPEPE (195 aa)) is the tr-type G domain. The segment at 19-26 (GHVDHGKT) is G1. Residue 19-26 (GHVDHGKT) participates in GTP binding. A Mg(2+)-binding site is contributed by T26. A G2 region spans residues 60–64 (GITIN). A G3 region spans residues 81–84 (DCPG). GTP-binding positions include 81 to 85 (DCPGH) and 136 to 139 (NKCD). A G4 region spans residues 136–139 (NKCD). The G5 stretch occupies residues 174-176 (SAL).

Belongs to the TRAFAC class translation factor GTPase superfamily. Classic translation factor GTPase family. EF-Tu/EF-1A subfamily. As to quaternary structure, monomer.

The protein resides in the cytoplasm. It catalyses the reaction GTP + H2O = GDP + phosphate + H(+). Its function is as follows. GTP hydrolase that promotes the GTP-dependent binding of aminoacyl-tRNA to the A-site of ribosomes during protein biosynthesis. The sequence is that of Elongation factor Tu from Enterobacter sp. (strain 638).